The chain runs to 1023 residues: Sodium/potassium-transporting ATPase subunit alpha-1 (1023 aa).

A propeptide spanning residues 1 to 5 is cleaved from the precursor; that stretch reads MGYGA. A compositionally biased stretch (basic and acidic residues) spans 1 to 11; that stretch reads MGYGAGRDKYE. The tract at residues 1-34 is disordered; sequence MGYGAGRDKYEPAATSEHGGKKGKGKGKDRDMEE. The Cytoplasmic segment spans residues 6–87; the sequence is GRDKYEPAAT…NALTPPPTTP (82 aa). A Phosphothreonine; by PKC modification is found at Thr15. Ser16 bears the Phosphoserine; by PKC mark. Residues 82–84 are interaction with phosphoinositide-3 kinase; that stretch reads PPP. Residues 88–108 traverse the membrane as a helical segment; the sequence is EWVKFCRQLFGGFSMLLWIGA. Over 109–131 the chain is Extracellular; that stretch reads ILCFLAYGIRKASDLEPDNDNLY. Residues 132 to 152 traverse the membrane as a helical segment; the sequence is LGVVLSAVVIITGCFSYYQEA. Over 153–288 the chain is Cytoplasmic; the sequence is KSSRIMESFK…GGQTPIAVEI (136 aa). The disordered stretch occupies residues 215 to 235; the sequence is NSSLTGESEPQTRSPDFTNEN. The helical transmembrane segment at 289–308 threads the bilayer; sequence GHFIHIITGVAVFLGVSFFI. At 309–320 the chain is on the extracellular side; that stretch reads LSLILHYTWLEA. The chain crosses the membrane as a helical span at residues 321–338; that stretch reads VIFLIGIIVANVPEGLLA. Topologically, residues 339–772 are cytoplasmic; that stretch reads TVTVCLTLTA…EEGRLIFDNL (434 aa). The 4-aspartylphosphate intermediate role is filled by Asp376. Residue Lys487 coordinates ATP. Asp717 and Asp721 together coordinate Mg(2+). A helical membrane pass occupies residues 773-792; that stretch reads KKSIAYTLTSNIPEITPFLI. Topologically, residues 793–802 are extracellular; the sequence is FIIADIPLPL. Residues 803-823 traverse the membrane as a helical segment; it reads GTVTILCIDLGTDMVPAISLA. Over 824–843 the chain is Cytoplasmic; the sequence is YEQAESDIMKRQPRNPKKDK. A helical transmembrane segment spans residues 844–866; that stretch reads LVNERLISMAYGQIGMIQALGGF. Residues 867 to 918 are Extracellular-facing; that stretch reads FAYFVILAENGFLPSTLLGIRVAWEDRYVNDVEDSYGQQWTYEQRKIVEFTC. The helical transmembrane segment at 919–938 threads the bilayer; sequence HTAFFVSIVVVQWADLIICK. Residues 939 to 951 lie on the Cytoplasmic side of the membrane; the sequence is TRRNSVFQQGMKN. Ser943 is subject to Phosphoserine; by PKA. Residues 952–970 traverse the membrane as a helical segment; it reads KILIFGLFEETALAAFLSY. At 971–985 the chain is on the extracellular side; it reads CPGMDVALRMYPLKP. The helical transmembrane segment at 986–1006 threads the bilayer; the sequence is TWWFCAFPYSLLIFIYDEVRK. Topologically, residues 1007–1023 are cytoplasmic; it reads LILRRSPGGWVEKETYY.

It belongs to the cation transport ATPase (P-type) (TC 3.A.3) family. Type IIC subfamily. As to quaternary structure, the sodium/potassium-transporting ATPase is composed of a catalytic alpha subunit, an auxiliary non-catalytic beta subunit and an additional regulatory subunit. In terms of tissue distribution, mainly expressed in kidney. Found in bladder, colon, eye, and testis. Found in low levels in brain, heart, spleen and liver.

Its subcellular location is the cell membrane. It localises to the sarcolemma. The enzyme catalyses K(+)(out) + Na(+)(in) + ATP + H2O = K(+)(in) + Na(+)(out) + ADP + phosphate + H(+). With respect to regulation, this alpha subunit is resistant to ouabain. Functionally, this is the catalytic component of the active enzyme, which catalyzes the hydrolysis of ATP coupled with the exchange of sodium and potassium ions across the plasma membrane. This action creates the electrochemical gradient of sodium and potassium ions, providing the energy for active transport of various nutrients. The chain is Sodium/potassium-transporting ATPase subunit alpha-1 (ATP1A1) from Rhinella marina (Cane toad).